The chain runs to 257 residues: 3-deoxy-manno-octulosonate cytidylyltransferase (257 aa).

The protein belongs to the KdsB family.

Its subcellular location is the cytoplasm. The enzyme catalyses 3-deoxy-alpha-D-manno-oct-2-ulosonate + CTP = CMP-3-deoxy-beta-D-manno-octulosonate + diphosphate. It participates in nucleotide-sugar biosynthesis; CMP-3-deoxy-D-manno-octulosonate biosynthesis; CMP-3-deoxy-D-manno-octulosonate from 3-deoxy-D-manno-octulosonate and CTP: step 1/1. The protein operates within bacterial outer membrane biogenesis; lipopolysaccharide biosynthesis. Its function is as follows. Activates KDO (a required 8-carbon sugar) for incorporation into bacterial lipopolysaccharide in Gram-negative bacteria. This Xylella fastidiosa (strain M23) protein is 3-deoxy-manno-octulosonate cytidylyltransferase.